The sequence spans 495 residues: Putative aldehyde dehydrogenase DhaS (495 aa).

244–249 (GSTEIG) serves as a coordination point for NAD(+). Residues Glu-266 and Cys-300 contribute to the active site.

It belongs to the aldehyde dehydrogenase family.

The enzyme catalyses an aldehyde + NAD(+) + H2O = a carboxylate + NADH + 2 H(+). The chain is Putative aldehyde dehydrogenase DhaS (dhaS) from Bacillus subtilis (strain 168).